The following is a 504-amino-acid chain: Cytochrome P450 2K1 (504 aa).

C447 is a heme binding site.

It belongs to the cytochrome P450 family. Heme serves as cofactor.

It is found in the endoplasmic reticulum membrane. The protein localises to the microsome membrane. It catalyses the reaction an organic molecule + reduced [NADPH--hemoprotein reductase] + O2 = an alcohol + oxidized [NADPH--hemoprotein reductase] + H2O + H(+). This Oncorhynchus mykiss (Rainbow trout) protein is Cytochrome P450 2K1 (cyp2k1).